Here is a 209-residue protein sequence, read N- to C-terminus: Glutathione S-transferase 1-1 (209 aa).

Residues 1-81 (MADFYYLPGS…YLVEKYGKTD (81 aa)) form the GST N-terminal domain. Glutathione contacts are provided by residues Ser10, 51–53 (HTI), and 65–67 (ESR). The GST C-terminal domain maps to 87-209 (CPKKRAVINQ…GCLEFKKFFE (123 aa)).

It belongs to the GST superfamily. Theta family. Homodimer.

It carries out the reaction RX + glutathione = an S-substituted glutathione + a halide anion + H(+). The catalysed reaction is 1,1,1-trichloro-2,2-bis(4-chlorophenyl)ethane = 1,1-dichloro-2,2-bis(4-chlorophenyl)ethylene + chloride + H(+). In terms of biological role, conjugation of reduced glutathione to a wide number of exogenous and endogenous hydrophobic electrophiles. Has DDT dehydrochlorinase activity. This Drosophila sechellia (Fruit fly) protein is Glutathione S-transferase 1-1 (GstD1).